A 328-amino-acid chain; its full sequence is 2,3-diketo-L-gulonate-binding periplasmic protein YiaO (328 aa).

An N-terminal signal peptide occupies residues 1–24 (MKLRSVTYALFIAGLAAFSTSSLA).

In terms of assembly, the complex comprises the extracytoplasmic solute receptor protein YiaO, and the two transmembrane proteins YiaM and YiaN.

It localises to the periplasm. Its function is as follows. Part of the tripartite ATP-independent periplasmic (TRAP) transport system YiaMNO involved in the uptake of 2,3-diketo-L-gulonate. This protein specifically binds 2,3-diketo-L-gulonate. Is not able to bind either L-ascorbate or dehydroascorbate. This is 2,3-diketo-L-gulonate-binding periplasmic protein YiaO (yiaO) from Escherichia coli (strain K12).